A 203-amino-acid polypeptide reads, in one-letter code: ATP synthase subunit b (203 aa).

A helical transmembrane segment spans residues Phe14–Ser34.

Belongs to the ATPase B chain family. As to quaternary structure, F-type ATPases have 2 components, F(1) - the catalytic core - and F(0) - the membrane proton channel. F(1) has five subunits: alpha(3), beta(3), gamma(1), delta(1), epsilon(1). F(0) has three main subunits: a(1), b(2) and c(10-14). The alpha and beta chains form an alternating ring which encloses part of the gamma chain. F(1) is attached to F(0) by a central stalk formed by the gamma and epsilon chains, while a peripheral stalk is formed by the delta and b chains.

Its subcellular location is the cell inner membrane. Functionally, f(1)F(0) ATP synthase produces ATP from ADP in the presence of a proton or sodium gradient. F-type ATPases consist of two structural domains, F(1) containing the extramembraneous catalytic core and F(0) containing the membrane proton channel, linked together by a central stalk and a peripheral stalk. During catalysis, ATP synthesis in the catalytic domain of F(1) is coupled via a rotary mechanism of the central stalk subunits to proton translocation. Component of the F(0) channel, it forms part of the peripheral stalk, linking F(1) to F(0). The protein is ATP synthase subunit b of Syntrophobacter fumaroxidans (strain DSM 10017 / MPOB).